A 398-amino-acid polypeptide reads, in one-letter code: Homeobox protein knotted-1-like 1 (398 aa).

3 disordered regions span residues 20–61 (SPIS…HHHQ), 78–102 (NCFR…ASSS), and 241–273 (LNNP…EIDP). Positions 23-56 (SSSNKNDNTSDTNNNNNNNNSSNYGPGYNNTNNN) are enriched in low complexity. A compositionally biased stretch (polar residues) spans 87-102 (PNNNNNPSVKSEASSS). The ELK domain occupies 279-299 (ELKNHLLKKYSGYLSSLKQEL). The homeobox; TALE-type DNA-binding region spans 300–363 (SKKKKKGKLP…NQRKRHWKPS (64 aa)).

The protein belongs to the TALE/KNOX homeobox family. In terms of assembly, may form heterodimeric complex with the TALE/BELL proteins BEL1, BLH2, BLH8/PNF and BLH9/PNY. Interacts with OFP1, OFP2, OFP4, OFP6 and OFP12. Interacts with CCT7 and CCT8. Interacts with KNATM-B. Binds to AGO10/PNH. Interacts with BZIP30. In terms of tissue distribution, expressed in the vegetative meristem. Present in the base of flower primordia.

Its subcellular location is the nucleus. Functionally, may play a role in meristem function, and may be involved in maintaining cells in an undifferentiated, meristematic state, and its expression disappears at the same time the shoot apex undergoes the transition from vegetative to reproductive development. Positive regulator of LATERAL ORGAN BOUNDARIES (LOB). Probably binds to the DNA sequence 5'-TGAC-3'. Able to traffic from the L1 to the L2/L3 layers of the meristem, presumably through plasmodesmata. The sequence is that of Homeobox protein knotted-1-like 1 (KNAT1) from Arabidopsis thaliana (Mouse-ear cress).